Consider the following 403-residue polypeptide: Phosphopentomutase (403 aa).

D13, D298, H303, D339, H340, and H351 together coordinate Mn(2+).

The protein belongs to the phosphopentomutase family. Mn(2+) serves as cofactor.

The protein resides in the cytoplasm. It catalyses the reaction 2-deoxy-alpha-D-ribose 1-phosphate = 2-deoxy-D-ribose 5-phosphate. The catalysed reaction is alpha-D-ribose 1-phosphate = D-ribose 5-phosphate. It functions in the pathway carbohydrate degradation; 2-deoxy-D-ribose 1-phosphate degradation; D-glyceraldehyde 3-phosphate and acetaldehyde from 2-deoxy-alpha-D-ribose 1-phosphate: step 1/2. Functionally, isomerase that catalyzes the conversion of deoxy-ribose 1-phosphate (dRib-1-P) and ribose 1-phosphate (Rib-1-P) to deoxy-ribose 5-phosphate (dRib-5-P) and ribose 5-phosphate (Rib-5-P), respectively. The polypeptide is Phosphopentomutase (Streptococcus pyogenes serotype M12 (strain MGAS2096)).